The following is a 1489-amino-acid chain: Chromatin-remodeling ATPase INO80 (1489 aa).

Phosphoserine is present on residues Ser-65, Ser-115, and Ser-133. Disordered stretches follow at residues 137 to 311 (NEKD…KLSM) and 393 to 452 (KRER…GLPT). 2 stretches are compositionally biased toward acidic residues: residues 140 to 164 (DADE…EDEA) and 214 to 291 (DENE…DFNP). Residues 301-311 (SSSSSSTKLSM) show a composition bias toward low complexity. Over residues 393–402 (KREREREEAL) the composition is skewed to basic and acidic residues. Positions 476 to 601 (IWKDMARKDS…SHFIGRKIKT (126 aa)) constitute a DBINO domain. Ser-610 is subject to Phosphoserine. Positions 718–890 (ANLYDQGING…WALLHFIMPS (173 aa)) constitute a Helicase ATP-binding domain. 731 to 738 (DEMGLGKT) contacts ATP. A DEAQ box motif is present at residues 841-844 (DEAQ). The Helicase C-terminal domain occupies 1303–1467 (KLDELLVKLK…TIEVGENDSE (165 aa)). A disordered region spans residues 1456–1489 (IKTIEVGENDSEVTREGSKSISQDGIKEAASALA).

The protein belongs to the SNF2/RAD54 helicase family. In terms of assembly, component of the chromatin-remodeling INO80 complex, at least composed of ARP4, ARP5, ARP8, RVB1, RVB2, TAF14, NHP10, IES1, IES3, IES4, IES6, ACT1, IES2, IES5 and INO80.

Its subcellular location is the nucleus. It carries out the reaction ATP + H2O = ADP + phosphate + H(+). In terms of biological role, ATPase component of the INO80 complex which remodels chromatin by shifting nucleosomes and is involved in DNA repair. Its ability to induce transcription of some phosphate-responsive genes is modulated by inositol polyphosphates. The INO80 complex is involved in DNA repair by associating with 'Ser-129' phosphorylated H2A histones as a response to DNA damage. This Saccharomyces cerevisiae (strain ATCC 204508 / S288c) (Baker's yeast) protein is Chromatin-remodeling ATPase INO80 (INO80).